The following is a 480-amino-acid chain: GPI-anchored wall transfer protein 1 (480 aa).

11 consecutive transmembrane segments (helical) span residues 20–40, 47–67, 70–90, 114–134, 153–173, 186–208, 228–248, 252–272, 291–311, 343–363, and 381–401; these read IAEINLVTTVALTAYFGWQLL, VPLVVDFLLNWAGLLLSITVY, DPVLLNLLIAVPCIVQLQILG, PFITAYRGGMLIITCLAILAV, LMDLGVGSFVFSNGLVAASAL, WSRLVSSVRSAGILLALGVARLV, FFFTLALVPLAMILVDPICTY, VFIALLLSVFSEYLLQKEGFL, ILSFLGYCAIFLLGQNTGFYV, WTSVTPLAGLLAWFFITVALF, and LPYVLWVAAYNLGFLSMYCMV. N-linked (GlcNAc...) asparagine glycosylation is present at asparagine 406. Transmembrane regions (helical) follow at residues 426 to 446 and 450 to 470; these read LFVFLLANCLTGLINMNMNTL and LTVQIAALFGYATVIASVAII.

The protein belongs to the PIGW family.

It localises to the endoplasmic reticulum membrane. It participates in glycolipid biosynthesis; glycosylphosphatidylinositol-anchor biosynthesis. Probable acetyltransferase, which acetylates the inositol ring of phosphatidylinositol during biosynthesis of GPI-anchor. This Eremothecium gossypii (strain ATCC 10895 / CBS 109.51 / FGSC 9923 / NRRL Y-1056) (Yeast) protein is GPI-anchored wall transfer protein 1 (GWT1).